The primary structure comprises 206 residues: Enterobactin synthase component D (206 aa).

Residues Asp-107, Glu-109, and Glu-152 each coordinate Mg(2+).

It belongs to the P-Pant transferase superfamily. EntD family. In terms of assembly, entB, EntD, EntE, and EntF form a multienzyme complex called enterobactin synthase. It depends on Mg(2+) as a cofactor.

The protein resides in the membrane. It carries out the reaction apo-[aryl-carrier protein] + CoA = holo-[aryl-carrier protein] + adenosine 3',5'-bisphosphate + H(+). The catalysed reaction is apo-[peptidyl-carrier protein] + CoA = holo-[peptidyl-carrier protein] + adenosine 3',5'-bisphosphate + H(+). It participates in siderophore biosynthesis; enterobactin biosynthesis. Functionally, involved in the biosynthesis of the siderophore enterobactin (enterochelin), which is a macrocyclic trimeric lactone of N-(2,3-dihydroxybenzoyl)-serine. The serine trilactone serves as a scaffolding for the three catechol functionalities that provide hexadentate coordination for the tightly ligated iron(2+) atoms. Plays an essential role in the assembly of the enterobactin by catalyzing the transfer of the 4'-phosphopantetheine (Ppant) moiety from coenzyme A to the apo-domains of both EntB (ArCP domain) and EntF (PCP domain) to yield their holo-forms which make them competent for the activation of 2,3-dihydroxybenzoate (DHB) and L-serine, respectively. The protein is Enterobactin synthase component D of Escherichia coli O157:H7.